The following is a 289-amino-acid chain: Protease HtpX (289 aa).

2 helical membrane-spanning segments follow: residues 5-25 and 33-53; these read IVLFAITNLAVLILASIVMSL and MSGLLVMALILGFGGSLISLL. His-140 serves as a coordination point for Zn(2+). The active site involves Glu-141. Position 144 (His-144) interacts with Zn(2+). The next 2 helical transmembrane spans lie at 155 to 175 and 193 to 213; these read LLQGVLNTFVIVLARVVGGFI and GIVLVLELLFGLFATIITMWF. Glu-218 serves as a coordination point for Zn(2+).

It belongs to the peptidase M48B family. The cofactor is Zn(2+).

It is found in the cell inner membrane. This chain is Protease HtpX, found in Xylella fastidiosa (strain M12).